The following is a 114-amino-acid chain: uncharacterized protein (114 aa).

This is an uncharacterized protein from Acanthamoeba polyphaga mimivirus (APMV).